Reading from the N-terminus, the 396-residue chain is Maltose/maltodextrin-binding periplasmic protein (396 aa).

The first 26 residues, 1–26 (MKIKTGARILALSALTTMMFSASALA), serve as a signal peptide directing secretion.

It belongs to the bacterial solute-binding protein 1 family. In terms of assembly, the complex is composed of two ATP-binding proteins (MalK), two transmembrane proteins (MalG and MalF) and a solute-binding protein (MalE).

Its subcellular location is the periplasm. Its function is as follows. Part of the ABC transporter complex MalEFGK involved in maltose/maltodextrin import. Binds maltose and higher maltodextrins. This is Maltose/maltodextrin-binding periplasmic protein (malE) from Escherichia coli O157:H7.